The primary structure comprises 384 residues: Transcriptional regulator of the unfolded protein response hacA (384 aa).

Over residues 1-18 (MTESTFAVETFSMDSMSP) the composition is skewed to polar residues. Disordered regions lie at residues 1 to 27 (MTES…IPRL) and 41 to 94 (LVPE…QRRI). A compositionally biased stretch (basic and acidic residues) spans 84 to 94 (KTEDEKEQRRI). Residues 90 to 153 (EQRRIERVLR…NRLSQQVAKL (64 aa)) enclose the bZIP domain. The interval 92-101 (RRIERVLRNR) is basic motif. Residues 106 to 113 (ISRERKRL) form a leucine-zipper region. 2 disordered regions span residues 208-256 (SIPF…PSDL) and 331-384 (PDED…AGAQ). A compositionally biased stretch (low complexity) spans 218–240 (STTTTTTTTTTTSNNISSTSSTT).

The protein belongs to the bZIP family.

It localises to the nucleus. Its function is as follows. Master transcriptional regulator of the unfolded protein response (UPR) that recognizes and binds to the UPR element (UPRE) in the promoter of UPR-regulated genes. Exposure to antifungals and ER-stressing agents initiates the activation of hacA which occurs when a 20 nucleotide fragment is removed from part of the exon-2 and part of intron-2, which in turn promotes the arisen of the DNA binding site motif and a dimer interface domain. Modulates the expression of genes related to cell wall synthesis, ergosterol biosynthesis, pigmentation, heat shock proteins, and the genes coding for mannosyltransferase enzymes. Plays a key role in both response to stress and host-pathogen interaction. The polypeptide is Transcriptional regulator of the unfolded protein response hacA (Trichophyton rubrum (strain ATCC MYA-4607 / CBS 118892) (Athlete's foot fungus)).